Here is a 305-residue protein sequence, read N- to C-terminus: Coiled-coil domain-containing protein 69-A (305 aa).

Glycine 2 carries N-myristoyl glycine lipidation. The disordered stretch occupies residues 13–38 (LRKKKRQKAHQGGLTSQELNDLNAKT). Over residues 25 to 38 (GLTSQELNDLNAKT) the composition is skewed to polar residues. A coiled-coil region spans residues 42–281 (NEVLQKIKEY…QREKEQNLYR (240 aa)).

The protein belongs to the CCDC69 family.

The protein resides in the cytoplasm. Its subcellular location is the cytoskeleton. It is found in the spindle. It localises to the midbody. Its function is as follows. May act as a scaffold to regulate the recruitment and assembly of spindle midzone components. In Xenopus laevis (African clawed frog), this protein is Coiled-coil domain-containing protein 69-A (ccdc69-a).